A 223-amino-acid polypeptide reads, in one-letter code: DNA mismatch repair protein MutH (223 aa).

Belongs to the MutH family.

Its subcellular location is the cytoplasm. Its function is as follows. Sequence-specific endonuclease that cleaves unmethylated GATC sequences. It is involved in DNA mismatch repair. The protein is DNA mismatch repair protein MutH of Haemophilus influenzae (strain 86-028NP).